The chain runs to 388 residues: Succinate--CoA ligase [ADP-forming] subunit beta (388 aa).

One can recognise an ATP-grasp domain in the interval 9–245 (KELLASYGLP…KSQENERELK (237 aa)). ATP is bound by residues Lys-46, 53–55 (GRG), Glu-100, Tyr-103, and Glu-108. Mg(2+) contacts are provided by Asn-200 and Asp-214. Residues Asn-265 and 322-324 (GIV) contribute to the substrate site.

Belongs to the succinate/malate CoA ligase beta subunit family. In terms of assembly, heterotetramer of two alpha and two beta subunits. Mg(2+) serves as cofactor.

It carries out the reaction succinate + ATP + CoA = succinyl-CoA + ADP + phosphate. The enzyme catalyses GTP + succinate + CoA = succinyl-CoA + GDP + phosphate. It participates in carbohydrate metabolism; tricarboxylic acid cycle; succinate from succinyl-CoA (ligase route): step 1/1. Its function is as follows. Succinyl-CoA synthetase functions in the citric acid cycle (TCA), coupling the hydrolysis of succinyl-CoA to the synthesis of either ATP or GTP and thus represents the only step of substrate-level phosphorylation in the TCA. The beta subunit provides nucleotide specificity of the enzyme and binds the substrate succinate, while the binding sites for coenzyme A and phosphate are found in the alpha subunit. In Neisseria gonorrhoeae (strain NCCP11945), this protein is Succinate--CoA ligase [ADP-forming] subunit beta.